Consider the following 136-residue polypeptide: Aspartate 1-decarboxylase (136 aa).

Catalysis depends on serine 25, which acts as the Schiff-base intermediate with substrate; via pyruvic acid. At serine 25 the chain carries Pyruvic acid (Ser). A substrate-binding site is contributed by threonine 57. The Proton donor role is filled by tyrosine 58. 73-75 lines the substrate pocket; the sequence is GAA.

This sequence belongs to the PanD family. As to quaternary structure, heterooctamer of four alpha and four beta subunits. Pyruvate is required as a cofactor. In terms of processing, is synthesized initially as an inactive proenzyme, which is activated by self-cleavage at a specific serine bond to produce a beta-subunit with a hydroxyl group at its C-terminus and an alpha-subunit with a pyruvoyl group at its N-terminus.

The protein resides in the cytoplasm. The enzyme catalyses L-aspartate + H(+) = beta-alanine + CO2. It participates in cofactor biosynthesis; (R)-pantothenate biosynthesis; beta-alanine from L-aspartate: step 1/1. Functionally, catalyzes the pyruvoyl-dependent decarboxylation of aspartate to produce beta-alanine. In Acidothermus cellulolyticus (strain ATCC 43068 / DSM 8971 / 11B), this protein is Aspartate 1-decarboxylase.